The chain runs to 601 residues: Probable serine/threonine-protein kinase WNK3 (601 aa).

The Protein kinase domain maps to 34–291 (GRFNEILGKG…ARELLDDPFL (258 aa)). Residues 114–117 (TELF) and Lys-164 each bind ATP. Residue Asp-181 is the Proton acceptor of the active site. Disordered stretches follow at residues 470–498 (GWRPGPATDDDDDDDLVGGGDDPDAPGGA) and 551–601 (ADDD…SEQP). Positions 477 to 493 (TDDDDDDDLVGGGDDPD) are enriched in acidic residues. Residues 560 to 571 (LQGSSSDTGGSN) are compositionally biased toward polar residues. A compositionally biased stretch (basic and acidic residues) spans 572–583 (HEQHAMGKDKEV).

The protein belongs to the protein kinase superfamily. Ser/Thr protein kinase family. WNK subfamily.

The catalysed reaction is L-seryl-[protein] + ATP = O-phospho-L-seryl-[protein] + ADP + H(+). It catalyses the reaction L-threonyl-[protein] + ATP = O-phospho-L-threonyl-[protein] + ADP + H(+). The chain is Probable serine/threonine-protein kinase WNK3 (WNK3) from Oryza sativa subsp. japonica (Rice).